Reading from the N-terminus, the 179-residue chain is MLQTTLKYRNRCNICVREYKCCIGSFMSRFGLSNMALTHYLTSIIHSFTSLAHQMLKRTNQDLPTPVKYYNPEIAKEYKKIEAAAEQKLLSMLPEEFQEDFRPFVISQQTSEEEAQIVKQADSICAYLKCLEELSAGNHEFALAKKRLDITLAERKTPEMDYFLNTFAPSFELSLDEIS.

His-53 is an a divalent metal cation binding site. Residues 62–65 and Asp-122 each bind substrate; that span reads DLPT. Position 122 (Asp-122) interacts with a divalent metal cation.

It belongs to the 5DNU family. In terms of assembly, homodimer. A divalent metal cation is required as a cofactor.

Its subcellular location is the cytoplasm. It catalyses the reaction a 2'-deoxyribonucleoside 5'-phosphate + H2O = a 2'-deoxyribonucleoside + phosphate. In terms of biological role, catalyzes the strictly specific dephosphorylation of 2'-deoxyribonucleoside 5'-monophosphates. In Vibrio vulnificus (strain CMCP6), this protein is 5'-deoxynucleotidase VV1_0013.